The primary structure comprises 512 residues: Putative ribose/galactose/methyl galactoside import ATP-binding protein 2 (512 aa).

ABC transporter domains are found at residues isoleucine 14–glutamine 251 and threonine 262–glutamate 507. Glycine 46–serine 53 contributes to the ATP binding site.

It belongs to the ABC transporter superfamily. Carbohydrate importer 2 (CUT2) (TC 3.A.1.2) family.

The protein resides in the cell inner membrane. The enzyme catalyses D-ribose(out) + ATP + H2O = D-ribose(in) + ADP + phosphate + H(+). The catalysed reaction is D-galactose(out) + ATP + H2O = D-galactose(in) + ADP + phosphate + H(+). Its function is as follows. Part of an ABC transporter complex involved in carbohydrate import. Could be involved in ribose, galactose and/or methyl galactoside import. Responsible for energy coupling to the transport system. The sequence is that of Putative ribose/galactose/methyl galactoside import ATP-binding protein 2 from Burkholderia cenocepacia (strain HI2424).